The primary structure comprises 919 residues: Isoleucine--tRNA ligase (919 aa).

A 'HIGH' region motif is present at residues 57–67 (PYANGHIHIGT). Glutamate 553 serves as a coordination point for L-isoleucyl-5'-AMP. Positions 594–598 (KMSKS) match the 'KMSKS' region motif. Position 597 (lysine 597) interacts with ATP. Zn(2+) is bound by residues cysteine 887, cysteine 890, cysteine 907, and cysteine 910.

Belongs to the class-I aminoacyl-tRNA synthetase family. IleS type 1 subfamily. In terms of assembly, monomer. The cofactor is Zn(2+).

The protein resides in the cytoplasm. The catalysed reaction is tRNA(Ile) + L-isoleucine + ATP = L-isoleucyl-tRNA(Ile) + AMP + diphosphate. Catalyzes the attachment of isoleucine to tRNA(Ile). As IleRS can inadvertently accommodate and process structurally similar amino acids such as valine, to avoid such errors it has two additional distinct tRNA(Ile)-dependent editing activities. One activity is designated as 'pretransfer' editing and involves the hydrolysis of activated Val-AMP. The other activity is designated 'posttransfer' editing and involves deacylation of mischarged Val-tRNA(Ile). This is Isoleucine--tRNA ligase from Thermotoga maritima (strain ATCC 43589 / DSM 3109 / JCM 10099 / NBRC 100826 / MSB8).